Here is a 433-residue protein sequence, read N- to C-terminus: GTPase Obg (433 aa).

One can recognise an Obg domain in the interval 2-160; sequence PTFVDQTKIE…RVLRLELKLL (159 aa). In terms of domain architecture, OBG-type G spans 161–334; sequence ADVGLVGFPS…LMNDTATLVE (174 aa). Residues 167–174, 192–196, 214–217, 284–287, and 315–317 each bind GTP; these read GFPSVGKS, FTTLT, DLPG, SQMD, and SSV. Mg(2+) is bound by residues serine 174 and threonine 194. Residues 355–433 enclose the OCT domain; the sequence is YKAPQRNEFM…IGKFVFEFVQ (79 aa).

This sequence belongs to the TRAFAC class OBG-HflX-like GTPase superfamily. OBG GTPase family. In terms of assembly, monomer. Mg(2+) serves as cofactor.

It localises to the cytoplasm. Functionally, an essential GTPase which binds GTP, GDP and possibly (p)ppGpp with moderate affinity, with high nucleotide exchange rates and a fairly low GTP hydrolysis rate. Plays a role in control of the cell cycle, stress response, ribosome biogenesis and in those bacteria that undergo differentiation, in morphogenesis control. This is GTPase Obg from Lactobacillus acidophilus (strain ATCC 700396 / NCK56 / N2 / NCFM).